The sequence spans 314 residues: Nodulation protein D 1 (314 aa).

The region spanning 6-63 (LDLNLLVALDALMTERNLTAAARSINLSQPAMSAAVGRLRTYFNDDLFTMVGRELVPT) is the HTH lysR-type domain. Positions 23 to 42 (LTAAARSINLSQPAMSAAVG) form a DNA-binding region, H-T-H motif.

It belongs to the LysR transcriptional regulatory family.

NodD regulates the expression of the nodABCFE genes which encode other nodulation proteins. NodD is also a negative regulator of its own expression. Binds flavonoids as inducers. This is Nodulation protein D 1 (nodD1) from Rhizobium leguminosarum bv. phaseoli.